We begin with the raw amino-acid sequence, 138 residues long: Small ribosomal subunit protein uS11c (138 aa).

The interval 1 to 21 (MAKSIPKIGSRKTGRIGSRKH) is disordered. Positions 9–21 (GSRKTGRIGSRKH) are enriched in basic residues.

Belongs to the universal ribosomal protein uS11 family. In terms of assembly, part of the 30S ribosomal subunit.

The protein resides in the plastid. Its subcellular location is the chloroplast. In Pisum sativum (Garden pea), this protein is Small ribosomal subunit protein uS11c.